The sequence spans 478 residues: Mannose-1-phosphate guanylyltransferase (478 aa).

The protein belongs to the mannose-6-phosphate isomerase type 2 family.

The enzyme catalyses alpha-D-mannose 1-phosphate + GTP + H(+) = GDP-alpha-D-mannose + diphosphate. Its pathway is nucleotide-sugar biosynthesis; GDP-alpha-D-mannose biosynthesis; GDP-alpha-D-mannose from alpha-D-mannose 1-phosphate (GTP route): step 1/1. In terms of biological role, involved in the biosynthesis of the capsular polysaccharide colanic acid. The polypeptide is Mannose-1-phosphate guanylyltransferase (manC) (Escherichia coli (strain K12)).